Reading from the N-terminus, the 545-residue chain is MTTNYIFVTGGVVSSLGKGIAAASLAAILEARGLNVTIMKLDPYINVDPGTMSPIQHGEVFVTEDGAETDLDLGHYERFIRTKMTRRNNFTTGRIYSDVLRKERRGDYLGATVQVIPHITNAIKERVLAGGEGHDVVLVEIGGTVGDIESLPFLEAIRQMAVEIGREHTLFMHLTLVPYMAAAGEVKTKPTQHSVKELLSIGIQPDILICRSDRAVPANERAKIALFCNVPEKAVISLKDVDSIYKIPGLLKSQGLDDYICKRFSLTCPEANLAEWEQVIYEEANPAGEVTIGMVGKYIELPDAYKSVIEALKHGGLKNRVTVNIKLIDSQDVETRGVEILKDLDAILIPGGFGYRGVEGKIATARYARENNIPYLGICLGMQVALIEFARNVAGMENANSTEFVPDCKYPVVALITEWRDEDGNVEVRSEKSDLGGTMRLGAQQCQLSDDSLVRQLYGEPTITERHRHRYEVNNMLLKPIEAAGLRVAGRSGDDQLVEIIEVPNHPWFVACQFHPEFTSTPRDGHPLFAGFVKAASEYQKRQAK.

Residues 1–266 (MTTNYIFVTG…DDYICKRFSL (266 aa)) form an amidoligase domain region. Ser-14 serves as a coordination point for CTP. Ser-14 lines the UTP pocket. ATP-binding positions include 15 to 20 (SLGKGI) and Asp-72. Residues Asp-72 and Glu-140 each coordinate Mg(2+). CTP-binding positions include 147–149 (DIE), 187–192 (KTKPTQ), and Lys-223. UTP is bound by residues 187 to 192 (KTKPTQ) and Lys-223. An ATP-binding site is contributed by 239-241 (KDV). Residues 291 to 542 (TIGMVGKYIE…VKAASEYQKR (252 aa)) form the Glutamine amidotransferase type-1 domain. Position 352 (Gly-352) interacts with L-glutamine. Cys-379 (nucleophile; for glutamine hydrolysis) is an active-site residue. L-glutamine is bound by residues 380–383 (LGMQ), Glu-403, and Arg-470. Residues His-515 and Glu-517 contribute to the active site.

It belongs to the CTP synthase family. In terms of assembly, homotetramer.

The catalysed reaction is UTP + L-glutamine + ATP + H2O = CTP + L-glutamate + ADP + phosphate + 2 H(+). It carries out the reaction L-glutamine + H2O = L-glutamate + NH4(+). It catalyses the reaction UTP + NH4(+) + ATP = CTP + ADP + phosphate + 2 H(+). Its pathway is pyrimidine metabolism; CTP biosynthesis via de novo pathway; CTP from UDP: step 2/2. Its activity is regulated as follows. Allosterically activated by GTP, when glutamine is the substrate; GTP has no effect on the reaction when ammonia is the substrate. The allosteric effector GTP functions by stabilizing the protein conformation that binds the tetrahedral intermediate(s) formed during glutamine hydrolysis. Inhibited by the product CTP, via allosteric rather than competitive inhibition. Its function is as follows. Catalyzes the ATP-dependent amination of UTP to CTP with either L-glutamine or ammonia as the source of nitrogen. Regulates intracellular CTP levels through interactions with the four ribonucleotide triphosphates. The chain is CTP synthase from Klebsiella pneumoniae subsp. pneumoniae (strain ATCC 700721 / MGH 78578).